The following is a 423-amino-acid chain: Riboflavin biosynthesis protein RibBA (423 aa).

The tract at residues 1–204 (MTRLDSVERA…IADLIEWRRK (204 aa)) is DHBP synthase. Residues 28 to 29 (RE), D33, 141 to 145 (RPGHT), and E165 contribute to the D-ribulose 5-phosphate site. Position 29 (E29) interacts with Mg(2+). H144 contributes to the Mg(2+) binding site. The interval 205–423 (HEKHIARVAE…AVPGEFGGAV (219 aa)) is GTP cyclohydrolase II. 259–263 (RVHSE) contributes to the GTP binding site. The Zn(2+) site is built by C264, C275, and C277. Residues Q280, 303–305 (EGR), and T325 each bind GTP. Catalysis depends on D337, which acts as the Proton acceptor; for GTP cyclohydrolase activity. R339 acts as the Nucleophile; for GTP cyclohydrolase activity in catalysis. Residues T360 and K365 each contribute to the GTP site.

The protein in the N-terminal section; belongs to the DHBP synthase family. This sequence in the C-terminal section; belongs to the GTP cyclohydrolase II family. Mg(2+) is required as a cofactor. Mn(2+) serves as cofactor. The cofactor is Zn(2+).

It carries out the reaction D-ribulose 5-phosphate = (2S)-2-hydroxy-3-oxobutyl phosphate + formate + H(+). The enzyme catalyses GTP + 4 H2O = 2,5-diamino-6-hydroxy-4-(5-phosphoribosylamino)-pyrimidine + formate + 2 phosphate + 3 H(+). It functions in the pathway cofactor biosynthesis; riboflavin biosynthesis; 2-hydroxy-3-oxobutyl phosphate from D-ribulose 5-phosphate: step 1/1. It participates in cofactor biosynthesis; riboflavin biosynthesis; 5-amino-6-(D-ribitylamino)uracil from GTP: step 1/4. Catalyzes the conversion of D-ribulose 5-phosphate to formate and 3,4-dihydroxy-2-butanone 4-phosphate. Its function is as follows. Catalyzes the conversion of GTP to 2,5-diamino-6-ribosylamino-4(3H)-pyrimidinone 5'-phosphate (DARP), formate and pyrophosphate. This chain is Riboflavin biosynthesis protein RibBA, found in Mycolicibacterium gilvum (strain PYR-GCK) (Mycobacterium gilvum (strain PYR-GCK)).